The following is an 80-amino-acid chain: Exodeoxyribonuclease 7 small subunit (80 aa).

It belongs to the XseB family. In terms of assembly, heterooligomer composed of large and small subunits.

It localises to the cytoplasm. It carries out the reaction Exonucleolytic cleavage in either 5'- to 3'- or 3'- to 5'-direction to yield nucleoside 5'-phosphates.. Functionally, bidirectionally degrades single-stranded DNA into large acid-insoluble oligonucleotides, which are then degraded further into small acid-soluble oligonucleotides. This chain is Exodeoxyribonuclease 7 small subunit, found in Vibrio parahaemolyticus serotype O3:K6 (strain RIMD 2210633).